Reading from the N-terminus, the 93-residue chain is Chaperone NapD (93 aa).

The protein belongs to the NapD family. As to quaternary structure, interacts with the cytoplasmic NapA precursor.

It localises to the cytoplasm. In terms of biological role, chaperone for NapA, the catalytic subunit of the periplasmic nitrate reductase. It binds directly and specifically to the twin-arginine signal peptide of NapA, preventing premature interaction with the Tat translocase and premature export. The protein is Chaperone NapD of Haemophilus influenzae (strain ATCC 51907 / DSM 11121 / KW20 / Rd).